The primary structure comprises 267 residues: Undecaprenyl-diphosphatase (267 aa).

7 helical membrane passes run 4 to 24 (LYAL…ISST), 41 to 61 (FWKS…IFVF), 69 to 89 (LDIW…GLFV), 96 to 116 (LFNG…FILI), 173 to 193 (AAEF…AYSI), 207 to 227 (IPLG…IKFF), and 239 to 259 (FGIY…SGIL).

This sequence belongs to the UppP family.

It is found in the cell inner membrane. The catalysed reaction is di-trans,octa-cis-undecaprenyl diphosphate + H2O = di-trans,octa-cis-undecaprenyl phosphate + phosphate + H(+). Its function is as follows. Catalyzes the dephosphorylation of undecaprenyl diphosphate (UPP). Confers resistance to bacitracin. The sequence is that of Undecaprenyl-diphosphatase from Campylobacter jejuni subsp. jejuni serotype O:2 (strain ATCC 700819 / NCTC 11168).